Reading from the N-terminus, the 678-residue chain is Penicillin-binding protein activator LpoA (678 aa).

The first 26 residues, 1–26 (MVPSTFSRLKAARCLPVVLAALIFAG), serve as a signal peptide directing secretion. Cysteine 27 carries the N-palmitoyl cysteine lipid modification. Cysteine 27 carries the S-diacylglycerol cysteine lipid modification. Disordered regions lie at residues 304–338 (AEQPQPQTVDGVASPAQASVSDLTGEQPAAQSVPV) and 495–530 (IALTGSPITPRETTDSGMTTNNPTLQTTPTDDQFTN). Residues 513–529 (TTNNPTLQTTPTDDQFT) are compositionally biased toward low complexity.

This sequence belongs to the LpoA family. In terms of assembly, interacts with PBP1a.

The protein localises to the cell outer membrane. Functionally, regulator of peptidoglycan synthesis that is essential for the function of penicillin-binding protein 1A (PBP1a). The sequence is that of Penicillin-binding protein activator LpoA from Escherichia coli O6:H1 (strain CFT073 / ATCC 700928 / UPEC).